Here is a 196-residue protein sequence, read N- to C-terminus: Imidazole glycerol phosphate synthase subunit HisH (196 aa).

Positions 2–196 (KIIIINTNCS…EQLIKNFLEI (195 aa)) constitute a Glutamine amidotransferase type-1 domain. The active-site Nucleophile is C77. Catalysis depends on residues H178 and E180.

Heterodimer of HisH and HisF.

The protein resides in the cytoplasm. It catalyses the reaction 5-[(5-phospho-1-deoxy-D-ribulos-1-ylimino)methylamino]-1-(5-phospho-beta-D-ribosyl)imidazole-4-carboxamide + L-glutamine = D-erythro-1-(imidazol-4-yl)glycerol 3-phosphate + 5-amino-1-(5-phospho-beta-D-ribosyl)imidazole-4-carboxamide + L-glutamate + H(+). The enzyme catalyses L-glutamine + H2O = L-glutamate + NH4(+). The protein operates within amino-acid biosynthesis; L-histidine biosynthesis; L-histidine from 5-phospho-alpha-D-ribose 1-diphosphate: step 5/9. IGPS catalyzes the conversion of PRFAR and glutamine to IGP, AICAR and glutamate. The HisH subunit catalyzes the hydrolysis of glutamine to glutamate and ammonia as part of the synthesis of IGP and AICAR. The resulting ammonia molecule is channeled to the active site of HisF. The chain is Imidazole glycerol phosphate synthase subunit HisH from Blochmanniella floridana.